The primary structure comprises 304 residues: UDP-N-acetylenolpyruvoylglucosamine reductase (304 aa).

The region spanning 31 to 196 (KVGGPADYLA…ISAKFNLKPG (166 aa)) is the FAD-binding PCMH-type domain. Arg175 is an active-site residue. Ser225 acts as the Proton donor in catalysis. Glu295 is an active-site residue.

The protein belongs to the MurB family. Requires FAD as cofactor.

Its subcellular location is the cytoplasm. The catalysed reaction is UDP-N-acetyl-alpha-D-muramate + NADP(+) = UDP-N-acetyl-3-O-(1-carboxyvinyl)-alpha-D-glucosamine + NADPH + H(+). It participates in cell wall biogenesis; peptidoglycan biosynthesis. Functionally, cell wall formation. This Streptococcus thermophilus (strain CNRZ 1066) protein is UDP-N-acetylenolpyruvoylglucosamine reductase.